Consider the following 346-residue polypeptide: 3-keto-steroid reductase ERG27 (346 aa).

Leucine 19, threonine 42, and lysine 48 together coordinate NADP(+). Catalysis depends on proton donor residues serine 182 and tyrosine 205. Residues tyrosine 205, lysine 209, and serine 241 each coordinate NADP(+). Lysine 209 acts as the Lowers pKa of active site Tyr in catalysis. The helical transmembrane segment at 242-262 (FSFFQYLNVFTYYGMLFLFYL) threads the bilayer. A glycan (N-linked (GlcNAc...) asparagine) is linked at asparagine 272.

It belongs to the short-chain dehydrogenases/reductases (SDR) family. ERG27 subfamily. Heterotetramer of ERG25, ERG26, ERG27 and ERG28. ERG28 acts as a scaffold to tether ERG27 and other 4,4-demethylation-related enzymes, forming a demethylation enzyme complex, in the endoplasmic reticulum. Interacts with ERG25 and ERG28. Also interacts with ERG7, but only in lipid particles.

The protein localises to the endoplasmic reticulum membrane. The protein resides in the lipid droplet. It catalyses the reaction 3-dehydro-4alpha-methylzymosterol + NADPH + H(+) = 4alpha-methylzymosterol + NADP(+). The protein operates within steroid biosynthesis; zymosterol biosynthesis; zymosterol from lanosterol: step 5/6. Functionally, 3-keto-steroid reductase; part of the third module of ergosterol biosynthesis pathway that includes the late steps of the pathway. ERG27 is a catalytic component of the C-4 demethylation complex that catalyzes the reduction of the keto group on the C-3. The third module or late pathway involves the ergosterol synthesis itself through consecutive reactions that mainly occur in the endoplasmic reticulum (ER) membrane. Firstly, the squalene synthase ERG9 catalyzes the condensation of 2 farnesyl pyrophosphate moieties to form squalene, which is the precursor of all steroids. Squalene synthase is crucial for balancing the incorporation of farnesyl diphosphate (FPP) into sterol and nonsterol isoprene synthesis. Secondly, the squalene epoxidase ERG1 catalyzes the stereospecific oxidation of squalene to (S)-2,3-epoxysqualene, which is considered to be a rate-limiting enzyme in steroid biosynthesis. Then, the lanosterol synthase ERG7 catalyzes the cyclization of (S)-2,3 oxidosqualene to lanosterol, a reaction that forms the sterol core. In the next steps, lanosterol is transformed to zymosterol through a complex process involving various demethylation, reduction and desaturation reactions. The lanosterol 14-alpha-demethylase ERG11 (also known as CYP51) catalyzes C14-demethylation of lanosterol to produce 4,4'-dimethyl cholesta-8,14,24-triene-3-beta-ol, which is critical for ergosterol biosynthesis. The C-14 reductase ERG24 reduces the C14=C15 double bond of 4,4-dimethyl-cholesta-8,14,24-trienol to produce 4,4-dimethyl-cholesta-8,24-dienol. 4,4-dimethyl-cholesta-8,24-dienol is substrate of the C-4 demethylation complex ERG25-ERG26-ERG27 in which ERG25 catalyzes the three-step monooxygenation required for the demethylation of 4,4-dimethyl and 4alpha-methylsterols, ERG26 catalyzes the oxidative decarboxylation that results in a reduction of the 3-beta-hydroxy group at the C-3 carbon to an oxo group, and ERG27 is responsible for the reduction of the keto group on the C-3. ERG28 has a role as a scaffold to help anchor ERG25, ERG26 and ERG27 to the endoplasmic reticulum and ERG29 regulates the activity of the iron-containing C4-methylsterol oxidase ERG25. Then, the sterol 24-C-methyltransferase ERG6 catalyzes the methyl transfer from S-adenosyl-methionine to the C-24 of zymosterol to form fecosterol. The C-8 sterol isomerase ERG2 catalyzes the reaction which results in unsaturation at C-7 in the B ring of sterols and thus converts fecosterol to episterol. The sterol-C5-desaturase ERG3 then catalyzes the introduction of a C-5 double bond in the B ring to produce 5-dehydroepisterol. The C-22 sterol desaturase ERG5 further converts 5-dehydroepisterol into ergosta-5,7,22,24(28)-tetraen-3beta-ol by forming the C-22(23) double bond in the sterol side chain. Finally, ergosta-5,7,22,24(28)-tetraen-3beta-ol is substrate of the C-24(28) sterol reductase ERG4 to produce ergosterol. Facilitates the association of ERG7 with lipid particles preventing its digestion in the endoplasmic reticulum and the lipid particles. This Candida albicans (strain SC5314 / ATCC MYA-2876) (Yeast) protein is 3-keto-steroid reductase ERG27.